The sequence spans 335 residues: MVREKITVSTRTLEWKCVELRTDSKRLYYGRFILSPLMKGQADTIGIAMRRALLGEIEGTCITRVKSEKVAHEYSTIAGIQESVHEILMNLKEIVFRSNLYGTCDASICVRGPGYVTAQDIVLPPYVEIVDNTQHIARLMEPINLCIRLEIERNRGYLIKTPQNFQDGSYPIDAVFMPIRNANYSIHSYGNGNEKQEILFLEIWTNGSLTPKEALHQASRNLIDLFIPFLHMEEQNSHLENNQHTVPLAPFFFHDKLDKLRKNKKEIALKSIFIDQSELPPRIYNCLKRSNIYTLLDLLNNSQENLMKIEHFHIEDVKEILGILEKQLVIFLPKK.

An alpha N-terminal domain (alpha-NTD) region spans residues 1–233 (MVREKITVST…DLFIPFLHME (233 aa)). Positions 265–335 (KEIALKSIFI…KQLVIFLPKK (71 aa)) are alpha C-terminal domain (alpha-CTD).

Belongs to the RNA polymerase alpha chain family. In terms of assembly, in plastids the minimal PEP RNA polymerase catalytic core is composed of four subunits: alpha, beta, beta', and beta''. When a (nuclear-encoded) sigma factor is associated with the core the holoenzyme is formed, which can initiate transcription.

The protein resides in the plastid. It localises to the chloroplast. It carries out the reaction RNA(n) + a ribonucleoside 5'-triphosphate = RNA(n+1) + diphosphate. Functionally, DNA-dependent RNA polymerase catalyzes the transcription of DNA into RNA using the four ribonucleoside triphosphates as substrates. In Coffea arabica (Arabian coffee), this protein is DNA-directed RNA polymerase subunit alpha.